An 815-amino-acid polypeptide reads, in one-letter code: Protein SEY1 homolog (815 aa).

The Cytoplasmic segment spans residues 1 to 737; sequence MRQIIDYDCN…IQSTGRQPQN (737 aa). The 233-residue stretch at 28-260 folds into the GB1/RHD3-type G domain; sequence TLGFNVISIL…LPKDYTRRIP (233 aa). Residue 38–45 participates in GTP binding; the sequence is GCQSTGKS. Positions 298 to 321 form a coiled coil; it reads AKDDILDGYKKSIKDLQKKMEKRE. A helical membrane pass occupies residues 738-758; that stretch reads IPWWIYLLIIILGFDEITYVL. At 759–761 the chain is on the lumenal side; the sequence is TSP. The helical transmembrane segment at 762-782 threads the bilayer; it reads VLVTLLLLLASFIYSYLTGNF. The Cytoplasmic portion of the chain corresponds to 783–815; the sequence is SSFCNYSQQFVIISTKILHYISGAIHSSLDNRK.

This sequence belongs to the TRAFAC class dynamin-like GTPase superfamily. GB1/RHD3 GTPase family. RHD3 subfamily.

The protein localises to the endoplasmic reticulum membrane. Its function is as follows. Probable GTP-binding protein that may be involved in cell development. The sequence is that of Protein SEY1 homolog from Cryptosporidium hominis.